The primary structure comprises 2140 residues: Dedicator of cytokinesis protein 7 (2140 aa).

Phosphoserine is present on residues serine 30, serine 180, and serine 182. Positions 138-183 (FNPNTLDKQKERQKGLPKQVFESDEAPDGNSYQDDQDDLKRRSMSI) are disordered. Positions 365 to 395 (FKEADATKNKEKLEKLKSQADQFCQRLGKYR) form a coiled coil. Lysine 381 carries the post-translational modification N6-methyllysine. Threonine 450 carries the post-translational modification Phosphothreonine. Serine 452 is subject to Phosphoserine. One can recognise a C2 DOCK-type domain in the interval 561–727 (RNLLYIYPQS…GVFNVEVVAV (167 aa)). Phosphoserine occurs at positions 862, 864, 882, 888, 896, 900, and 905. Low complexity predominate over residues 888 to 901 (SLNLNRSRSLSNSN). The disordered stretch occupies residues 888–971 (SLNLNRSRSL…MSSHTETSSF (84 aa)). A phosphothreonine mark is found at threonine 907 and threonine 909. 14 positions are modified to phosphoserine: serine 910, serine 929, serine 964, serine 1383, lysine 1390, alanine 1394, glutamate 1398, tyrosine 1421, serine 1425, arginine 1429, serine 1430, serine 1432, serine 1434, and serine 1438. Positions 943–971 (SNPSPSAESTQAMDRSCNRMSSHTETSSF) are enriched in polar residues. In terms of domain architecture, DOCKER spans 1678–2114 (KGYQTSPDLR…LQPLINRKIP (437 aa)). The residue at position 1962 (lysine 1962) is an N6-acetyllysine. Residues 2086–2112 (DQKEYQRELERNYHRLKEALQPLINRK) are a coiled coil. The residue at position 2129 (serine 2129) is a Phosphoserine.

The protein belongs to the DOCK family. As to quaternary structure, component of the DOCK7-induced septin displacement/DISP complex, at least composed of DOCK7, LRCH3 and MYO6. Interacts with TSC1. Interacts with nucleotide-free RAC1 and RAC3. Interacts with TACC3 and CRY1. Interacts with NOD2. Widely expressed.

The protein resides in the cell projection. It is found in the axon. Its function is as follows. Functions as a guanine nucleotide exchange factor (GEF), which activates Rac1 and Rac3 Rho small GTPases by exchanging bound GDP for free GTP. Does not have a GEF activity for CDC42. Required for STMN1 'Ser-15' phosphorylation during axon formation and consequently for neuronal polarization. As part of the DISP complex, may regulate the association of septins with actin and thereby regulate the actin cytoskeleton. Has a role in pigmentation. Involved in the regulation of cortical neurogenesis through the control of radial glial cells (RGCs) proliferation versus differentiation; negatively regulates the basal-to-apical interkinetic nuclear migration of RGCs by antagonizing the microtubule growth-promoting function of TACC3. The chain is Dedicator of cytokinesis protein 7 (DOCK7) from Homo sapiens (Human).